A 350-amino-acid polypeptide reads, in one-letter code: Histidinol-phosphate aminotransferase (350 aa).

Residue Lys-209 is modified to N6-(pyridoxal phosphate)lysine.

It belongs to the class-II pyridoxal-phosphate-dependent aminotransferase family. Histidinol-phosphate aminotransferase subfamily. Homodimer. The cofactor is pyridoxal 5'-phosphate.

It catalyses the reaction L-histidinol phosphate + 2-oxoglutarate = 3-(imidazol-4-yl)-2-oxopropyl phosphate + L-glutamate. The protein operates within amino-acid biosynthesis; L-histidine biosynthesis; L-histidine from 5-phospho-alpha-D-ribose 1-diphosphate: step 7/9. This chain is Histidinol-phosphate aminotransferase, found in Christiangramia forsetii (strain DSM 17595 / CGMCC 1.15422 / KT0803) (Gramella forsetii).